Consider the following 191-residue polypeptide: Crossover junction endodeoxyribonuclease RuvC (191 aa).

Residues Asp-7, Glu-67, and Asp-141 contribute to the active site. 3 residues coordinate Mg(2+): Asp-7, Glu-67, and Asp-141.

The protein belongs to the RuvC family. In terms of assembly, homodimer which binds Holliday junction (HJ) DNA. The HJ becomes 2-fold symmetrical on binding to RuvC with unstacked arms; it has a different conformation from HJ DNA in complex with RuvA. In the full resolvosome a probable DNA-RuvA(4)-RuvB(12)-RuvC(2) complex forms which resolves the HJ. Requires Mg(2+) as cofactor.

The protein resides in the cytoplasm. It catalyses the reaction Endonucleolytic cleavage at a junction such as a reciprocal single-stranded crossover between two homologous DNA duplexes (Holliday junction).. Its function is as follows. The RuvA-RuvB-RuvC complex processes Holliday junction (HJ) DNA during genetic recombination and DNA repair. Endonuclease that resolves HJ intermediates. Cleaves cruciform DNA by making single-stranded nicks across the HJ at symmetrical positions within the homologous arms, yielding a 5'-phosphate and a 3'-hydroxyl group; requires a central core of homology in the junction. The consensus cleavage sequence is 5'-(A/T)TT(C/G)-3'. Cleavage occurs on the 3'-side of the TT dinucleotide at the point of strand exchange. HJ branch migration catalyzed by RuvA-RuvB allows RuvC to scan DNA until it finds its consensus sequence, where it cleaves and resolves the cruciform DNA. This chain is Crossover junction endodeoxyribonuclease RuvC, found in Myxococcus xanthus (strain DK1622).